The following is a 119-amino-acid chain: MEFGLSWVFLVVILQGVQCEVQLVESGGGLVQPGGSLRLSCAASGFTFSDHYMDWVRQAPGKGLEWVGRTRNKANSYTTEYAASVKGRFTISRDDSKNSLYLQMNSLKTEDTAVYYCAR.

The N-terminal stretch at 1-19 is a signal peptide; it reads MEFGLSWVFLVVILQGVQC. The segment at 20-44 is framework-1; it reads EVQLVESGGGLVQPGGSLRLSCAAS. Positions 20–119 constitute an Ig-like domain; it reads EVQLVESGGG…EDTAVYYCAR (100 aa). A disulfide bridge links C41 with C117. Residues 45-52 are complementarity-determining-1; it reads GFTFSDHY. A framework-2 region spans residues 53-69; that stretch reads MDWVRQAPGKGLEWVGR. The complementarity-determining-2 stretch occupies residues 70–79; it reads TRNKANSYTT. A framework-3 region spans residues 80-117; the sequence is EYAASVKGRFTISRDDSKNSLYLQMNSLKTEDTAVYYC. The segment at 118–119 is complementarity-determining-3; it reads AR.

As to quaternary structure, immunoglobulins are composed of two identical heavy chains and two identical light chains; disulfide-linked.

Its subcellular location is the secreted. It localises to the cell membrane. V region of the variable domain of immunoglobulin heavy chains that participates in the antigen recognition. Immunoglobulins, also known as antibodies, are membrane-bound or secreted glycoproteins produced by B lymphocytes. In the recognition phase of humoral immunity, the membrane-bound immunoglobulins serve as receptors which, upon binding of a specific antigen, trigger the clonal expansion and differentiation of B lymphocytes into immunoglobulins-secreting plasma cells. Secreted immunoglobulins mediate the effector phase of humoral immunity, which results in the elimination of bound antigens. The antigen binding site is formed by the variable domain of one heavy chain, together with that of its associated light chain. Thus, each immunoglobulin has two antigen binding sites with remarkable affinity for a particular antigen. The variable domains are assembled by a process called V-(D)-J rearrangement and can then be subjected to somatic hypermutations which, after exposure to antigen and selection, allow affinity maturation for a particular antigen. The polypeptide is Immunoglobulin heavy variable 3-72 (Homo sapiens (Human)).